The following is a 666-amino-acid chain: tRNA 5-methylaminomethyl-2-thiouridine biosynthesis bifunctional protein MnmC (666 aa).

Positions 1 to 245 are tRNA (mnm(5)s(2)U34)-methyltransferase; that stretch reads MKQYAIQPAT…KREMLCGVME (245 aa). The interval 270-666 is FAD-dependent cmnm(5)s(2)U34 oxidoreductase; that stretch reads IGGGIASALL…RKLLKGKAVK (397 aa).

It in the N-terminal section; belongs to the methyltransferase superfamily. tRNA (mnm(5)s(2)U34)-methyltransferase family. This sequence in the C-terminal section; belongs to the DAO family. Requires FAD as cofactor.

Its subcellular location is the cytoplasm. It catalyses the reaction 5-aminomethyl-2-thiouridine(34) in tRNA + S-adenosyl-L-methionine = 5-methylaminomethyl-2-thiouridine(34) in tRNA + S-adenosyl-L-homocysteine + H(+). Functionally, catalyzes the last two steps in the biosynthesis of 5-methylaminomethyl-2-thiouridine (mnm(5)s(2)U) at the wobble position (U34) in tRNA. Catalyzes the FAD-dependent demodification of cmnm(5)s(2)U34 to nm(5)s(2)U34, followed by the transfer of a methyl group from S-adenosyl-L-methionine to nm(5)s(2)U34, to form mnm(5)s(2)U34. The chain is tRNA 5-methylaminomethyl-2-thiouridine biosynthesis bifunctional protein MnmC from Salmonella paratyphi B (strain ATCC BAA-1250 / SPB7).